We begin with the raw amino-acid sequence, 478 residues long: ATP-dependent RNA helicase DDX19A (478 aa).

At Ala2 the chain carries N-acetylalanine. Residues Ala2–Glu299 form an N-terminal lobe region. Lys26 participates in a covalent cross-link: Glycyl lysine isopeptide (Lys-Gly) (interchain with G-Cter in SUMO1); alternate. Lys26 is covalently cross-linked (Glycyl lysine isopeptide (Lys-Gly) (interchain with G-Cter in SUMO2); alternate). Residues Thr34–Glu53 are disordered. The residue at position 42 (Thr42) is a Phosphothreonine. An N-terminal helix region spans residues Asp54–Ser67. The Q motif motif lies at Lys91–Glu119. ATP contacts are provided by residues Gln118 and Ser137–Thr144. In terms of domain architecture, Helicase ATP-binding spans Met124–Ile294. The DEAD box signature appears at Asp241–Asp244. Residues Glu300 to Asn478 are C-terminal lobe. In terms of domain architecture, Helicase C-terminal spans Thr305–Ile473. Residues Arg428 and Arg431 each contribute to the ATP site.

This sequence belongs to the DEAD box helicase family. DDX19/DBP5 subfamily. As to expression, found in testis, heart, brain, liver, skeletal muscle, and kidney.

The protein localises to the cytoplasm. The protein resides in the nucleus. It is found in the nucleoplasm. It carries out the reaction ATP + H2O = ADP + phosphate + H(+). Its function is as follows. ATP-dependent RNA helicase involved in mRNA export from the nucleus. Rather than unwinding RNA duplexes, DDX19 functions as a remodeler of ribonucleoprotein particles, whereby proteins bound to nuclear mRNA are dissociated and replaced by cytoplasmic mRNA binding proteins. In Mus musculus (Mouse), this protein is ATP-dependent RNA helicase DDX19A (Ddx19a).